A 210-amino-acid chain; its full sequence is Large ribosomal subunit protein uL4 (210 aa).

Residues 41–51 (ANARQGTQSTK) show a composition bias toward polar residues. Disordered stretches follow at residues 41–60 (ANAR…QGSS) and 67–98 (KGTG…DFSK).

This sequence belongs to the universal ribosomal protein uL4 family. In terms of assembly, part of the 50S ribosomal subunit.

In terms of biological role, one of the primary rRNA binding proteins, this protein initially binds near the 5'-end of the 23S rRNA. It is important during the early stages of 50S assembly. It makes multiple contacts with different domains of the 23S rRNA in the assembled 50S subunit and ribosome. Forms part of the polypeptide exit tunnel. This chain is Large ribosomal subunit protein uL4, found in Dehalococcoides mccartyi (strain ATCC BAA-2266 / KCTC 15142 / 195) (Dehalococcoides ethenogenes (strain 195)).